Reading from the N-terminus, the 274-residue chain is 4-diphosphocytidyl-2-C-methyl-D-erythritol kinase (274 aa).

K10 is an active-site residue. 101 to 111 (PTQAGLGGGSA) provides a ligand contact to ATP. D143 is an active-site residue.

Belongs to the GHMP kinase family. IspE subfamily.

It catalyses the reaction 4-CDP-2-C-methyl-D-erythritol + ATP = 4-CDP-2-C-methyl-D-erythritol 2-phosphate + ADP + H(+). It participates in isoprenoid biosynthesis; isopentenyl diphosphate biosynthesis via DXP pathway; isopentenyl diphosphate from 1-deoxy-D-xylulose 5-phosphate: step 3/6. Its function is as follows. Catalyzes the phosphorylation of the position 2 hydroxy group of 4-diphosphocytidyl-2C-methyl-D-erythritol. This Helicobacter pylori (strain HPAG1) protein is 4-diphosphocytidyl-2-C-methyl-D-erythritol kinase.